The primary structure comprises 68 residues: TxMMSK-03 (68 aa).

Positions 1–19 are cleaved as a signal peptide; the sequence is MSKLGALLIICLLLFPLTA. Positions 20–50 are excised as a propeptide; sequence VPMDGDQPADRPAERMQDDISFEQHPMFDAT. 3 cysteine pairs are disulfide-bonded: cysteine 53/cysteine 67, cysteine 54/cysteine 63, and cysteine 59/cysteine 66. The residue at position 65 (proline 65) is a 4-hydroxyproline; partial.

Post-translationally, contains 3 disulfide bonds. As to expression, expressed by the venom duct. Both hydroxylated and non-hydroxylated forms are mostly and only present in part 2 (proximal of the venom bulb) of the venom duct, respectively.

It localises to the secreted. This chain is TxMMSK-03, found in Conus textile (Cloth-of-gold cone).